A 294-amino-acid polypeptide reads, in one-letter code: 33 kDa chaperonin (294 aa).

Disulfide bonds link Cys239–Cys241 and Cys272–Cys275.

It belongs to the HSP33 family. In terms of processing, under oxidizing conditions two disulfide bonds are formed involving the reactive cysteines. Under reducing conditions zinc is bound to the reactive cysteines and the protein is inactive.

Its subcellular location is the cytoplasm. In terms of biological role, redox regulated molecular chaperone. Protects both thermally unfolding and oxidatively damaged proteins from irreversible aggregation. Plays an important role in the bacterial defense system toward oxidative stress. The sequence is that of 33 kDa chaperonin from Listeria monocytogenes serovar 1/2a (strain ATCC BAA-679 / EGD-e).